We begin with the raw amino-acid sequence, 175 residues long: uncharacterized protein (175 aa).

A mitochondrion-targeting transit peptide spans 1 to 11 (METWRKGSFRN). Positions 24-92 (RRLRRQSSVL…PRLYRESSSC (69 aa)) are disordered. Residues 41–63 (GDHEEYSNREVIRELQGRPDGRR) show a composition bias toward basic and acidic residues.

The protein localises to the mitochondrion. This is an uncharacterized protein from Homo sapiens (Human).